Reading from the N-terminus, the 341-residue chain is UDP-N-acetylenolpyruvoylglucosamine reductase (341 aa).

The FAD-binding PCMH-type domain maps to Leu-12 to Asn-182. Arg-158 is a catalytic residue. Ser-228 acts as the Proton donor in catalysis. The active site involves Glu-324.

Belongs to the MurB family. FAD is required as a cofactor.

The protein resides in the cytoplasm. It catalyses the reaction UDP-N-acetyl-alpha-D-muramate + NADP(+) = UDP-N-acetyl-3-O-(1-carboxyvinyl)-alpha-D-glucosamine + NADPH + H(+). Its pathway is cell wall biogenesis; peptidoglycan biosynthesis. In terms of biological role, cell wall formation. The protein is UDP-N-acetylenolpyruvoylglucosamine reductase of Photorhabdus laumondii subsp. laumondii (strain DSM 15139 / CIP 105565 / TT01) (Photorhabdus luminescens subsp. laumondii).